The following is a 214-amino-acid chain: uncharacterized protein (214 aa).

Residues 1–17 (MLKKIIILFLGVFVLSG) form the signal peptide. Residue cysteine 18 is the site of N-palmitoyl cysteine attachment. The S-diacylglycerol cysteine moiety is linked to residue cysteine 18. The segment covering 64-77 (DNLDDPEDDDDDYD) has biased composition (acidic residues). Disordered regions lie at residues 64–83 (DNLD…LRGE), 106–138 (YKAE…KERK), and 166–197 (TANQ…SKVK). Residues 120-162 (TLSKANKKVRKDNTDKERKMQEELDQIKAMLRETKRDISKYTC) are a coiled coil.

The protein localises to the cell membrane. This is an uncharacterized protein from Rickettsia bellii (strain RML369-C).